Reading from the N-terminus, the 184-residue chain is MLPLYVVNNHGQFNHLILRTLRDMDIEATMISNETPPAEVARGCRGIVLGGGPTLERAGVASAYLDLGLPVLGICLGLHIMATARGGAIRRGASGGFGAVEVEIFEQNPLLRGYPDRMQVWASHADEVSVVPEGFVRLAGSSICGVEAMASPDEHLYGIQWHPEVSHTVNGRLLFENFDGICSE.

Residues 3-184 (PLYVVNNHGQ…FENFDGICSE (182 aa)) form the Glutamine amidotransferase type-1 domain. Cys-75 acts as the Nucleophile in catalysis. Residues His-162 and Glu-164 contribute to the active site.

As to quaternary structure, heterodimer composed of a glutamine amidotransferase subunit (A) and a GMP-binding subunit (B).

The enzyme catalyses XMP + L-glutamine + ATP + H2O = GMP + L-glutamate + AMP + diphosphate + 2 H(+). It functions in the pathway purine metabolism; GMP biosynthesis; GMP from XMP (L-Gln route): step 1/1. Its function is as follows. Catalyzes the synthesis of GMP from XMP. The chain is GMP synthase [glutamine-hydrolyzing] subunit A from Methanoculleus marisnigri (strain ATCC 35101 / DSM 1498 / JR1).